The chain runs to 307 residues: MNAASTDKPRLRVLAGCTAVGKTEWALRWAEAHNAEIVSCDSLLFYRGMDIGTAKPTAGELARVPHHLVDVCDVREAMNIAGYVAAARRALTEIAARGREALVVGGSGFYLKAFFGPVADDVEVSAAVRAEVAALTPAAAVERLRQLNPPGLGALDTANPRRVVRALERCLASGRTLAELSAAFARQPGPFADWDARLTVLDRDPVELNQRIAARVAAMLAAGLVDEVKRLLPAGLKENPSAARAIGYREVIDLLEGRLPAASLAAEIEKNTRALVKKQRTWFRTQLPDHRRVDAAVLRDAGGLFDF.

Residue 16 to 23 coordinates ATP; the sequence is GCTAVGKT. 18–23 is a substrate binding site; it reads TAVGKT. Residues 41-44 are interaction with substrate tRNA; it reads DSLL.

It belongs to the IPP transferase family. In terms of assembly, monomer. The cofactor is Mg(2+).

The catalysed reaction is adenosine(37) in tRNA + dimethylallyl diphosphate = N(6)-dimethylallyladenosine(37) in tRNA + diphosphate. In terms of biological role, catalyzes the transfer of a dimethylallyl group onto the adenine at position 37 in tRNAs that read codons beginning with uridine, leading to the formation of N6-(dimethylallyl)adenosine (i(6)A). The protein is tRNA dimethylallyltransferase of Opitutus terrae (strain DSM 11246 / JCM 15787 / PB90-1).